The chain runs to 356 residues: sn-glycerol-3-phosphate import ATP-binding protein UgpC (356 aa).

In terms of domain architecture, ABC transporter spans 4–235 (LKLQAVTKSW…PASLFVASFI (232 aa)). 37–44 (GPSGCGKS) contributes to the ATP binding site.

The protein belongs to the ABC transporter superfamily. sn-glycerol-3-phosphate importer (TC 3.A.1.1.3) family. In terms of assembly, the complex is composed of two ATP-binding proteins (UgpC), two transmembrane proteins (UgpA and UgpE) and a solute-binding protein (UgpB).

It is found in the cell inner membrane. It carries out the reaction sn-glycerol 3-phosphate(out) + ATP + H2O = sn-glycerol 3-phosphate(in) + ADP + phosphate + H(+). Functionally, part of the ABC transporter complex UgpBAEC involved in sn-glycerol-3-phosphate (G3P) import. Responsible for energy coupling to the transport system. The protein is sn-glycerol-3-phosphate import ATP-binding protein UgpC of Escherichia coli O157:H7.